The following is a 285-amino-acid chain: 2-dehydro-3-deoxyphosphooctonate aldolase (285 aa).

The protein belongs to the KdsA family.

It localises to the cytoplasm. It carries out the reaction D-arabinose 5-phosphate + phosphoenolpyruvate + H2O = 3-deoxy-alpha-D-manno-2-octulosonate-8-phosphate + phosphate. It participates in carbohydrate biosynthesis; 3-deoxy-D-manno-octulosonate biosynthesis; 3-deoxy-D-manno-octulosonate from D-ribulose 5-phosphate: step 2/3. Its pathway is bacterial outer membrane biogenesis; lipopolysaccharide biosynthesis. In Methylibium petroleiphilum (strain ATCC BAA-1232 / LMG 22953 / PM1), this protein is 2-dehydro-3-deoxyphosphooctonate aldolase.